We begin with the raw amino-acid sequence, 150 residues long: Large ribosomal subunit protein bL9 (150 aa).

The protein belongs to the bacterial ribosomal protein bL9 family.

Its function is as follows. Binds to the 23S rRNA. This chain is Large ribosomal subunit protein bL9, found in Burkholderia pseudomallei (strain 668).